The primary structure comprises 258 residues: Tryptophan synthase alpha chain (258 aa).

Catalysis depends on proton acceptor residues Glu-50 and Asp-61.

This sequence belongs to the TrpA family. Tetramer of two alpha and two beta chains.

The catalysed reaction is (1S,2R)-1-C-(indol-3-yl)glycerol 3-phosphate + L-serine = D-glyceraldehyde 3-phosphate + L-tryptophan + H2O. The protein operates within amino-acid biosynthesis; L-tryptophan biosynthesis; L-tryptophan from chorismate: step 5/5. The alpha subunit is responsible for the aldol cleavage of indoleglycerol phosphate to indole and glyceraldehyde 3-phosphate. The chain is Tryptophan synthase alpha chain from Clostridium beijerinckii (strain ATCC 51743 / NCIMB 8052) (Clostridium acetobutylicum).